A 605-amino-acid polypeptide reads, in one-letter code: Replication and transcription activator (605 aa).

Disordered stretches follow at residues 307-381 and 447-509; these read SLPS…EPEQ and RIRP…EDPD. Positions 321 to 338 are enriched in low complexity; sequence SADCGDSSSSSSDSGNSD. A compositionally biased stretch (basic and acidic residues) spans 341-353; the sequence is QSEREEARAEAPR. Positions 355–364 are enriched in basic residues; that stretch reads RAPKSRRTSR.

It belongs to the herpesviridae Rta family. Interacts with human ATF7IP protein, leading to promote and regulate host genes in virus-infected cells. Interacts with RNA polymerase III complex; this interaction downregulates small RNA transcription and 5'-pppRNA production.

The protein localises to the host nucleus. The protein resides in the virion tegument. Functionally, immediate-early transcription factor that controls the initiation of viral lytic gene expression and lytic reactivation from latency. Triggers lytic replication, and initiates a cellular senescence program in epithelial cells. Up-regulates human DCR3/TNFRSF6B by directly binding to its receptor. Globally induces a proteasome-dependent loss of SUMOylated proteins in the host cell and the loss of promeylocytic leukemia nuclear bodies. Improves the stability of the triplex capsid protein TRX1 by reducing the ubiquitination level of the latter. Mediates evasion of inflammasome activation and antiviral responses (T- and NK cell activation) during EBV early lytic infection. The sequence is that of Replication and transcription activator from Epstein-Barr virus (strain AG876) (HHV-4).